The chain runs to 262 residues: NADPH-dependent 7-cyano-7-deazaguanine reductase (262 aa).

69–71 (IES) provides a ligand contact to substrate. 71 to 72 (SK) lines the NADPH pocket. C170 acts as the Thioimide intermediate in catalysis. D177 functions as the Proton donor in the catalytic mechanism. Position 209 to 210 (209 to 210 (HE)) interacts with substrate. 238-239 (RG) is an NADPH binding site.

Belongs to the GTP cyclohydrolase I family. QueF type 2 subfamily. As to quaternary structure, homodimer.

It localises to the cytoplasm. The enzyme catalyses 7-aminomethyl-7-carbaguanine + 2 NADP(+) = 7-cyano-7-deazaguanine + 2 NADPH + 3 H(+). It participates in tRNA modification; tRNA-queuosine biosynthesis. Functionally, catalyzes the NADPH-dependent reduction of 7-cyano-7-deazaguanine (preQ0) to 7-aminomethyl-7-deazaguanine (preQ1). The protein is NADPH-dependent 7-cyano-7-deazaguanine reductase of Buchnera aphidicola subsp. Schizaphis graminum (strain Sg).